The chain runs to 231 residues: Cell cycle transcriptional regulator CtrA (231 aa).

Residues 2–116 (RVLLIEDDSA…EMIARIHAVV (115 aa)) enclose the Response regulatory domain. Asp-51 is modified (4-aspartylphosphate). The ompR/PhoB-type DNA-binding region spans 124–223 (QSVIKTGDIV…VWGRGYVLRD (100 aa)).

Phosphorylated by CckA.

Forms part of a two-component regulatory system CtrA/CckA that controls multiple events in the cell cycle, including cell division, stalk synthesis and cell cycle-specific transcription. Binds to a group of cell cycle-regulated promoters critical for DNA replication, DNA methylation, and class II flagellar biogenesis. This is Cell cycle transcriptional regulator CtrA (ctrA) from Caulobacter vibrioides (strain ATCC 19089 / CIP 103742 / CB 15) (Caulobacter crescentus).